The following is a 185-amino-acid chain: Probable chorismate pyruvate-lyase 1 (185 aa).

Arginine 68, leucine 106, and glutamate 164 together coordinate substrate.

The protein belongs to the UbiC family.

Its subcellular location is the cytoplasm. It carries out the reaction chorismate = 4-hydroxybenzoate + pyruvate. Its pathway is cofactor biosynthesis; ubiquinone biosynthesis. Its function is as follows. Removes the pyruvyl group from chorismate, with concomitant aromatization of the ring, to provide 4-hydroxybenzoate (4HB) for the ubiquinone pathway. In Pseudomonas entomophila (strain L48), this protein is Probable chorismate pyruvate-lyase 1.